We begin with the raw amino-acid sequence, 286 residues long: 4-hydroxybenzoate octaprenyltransferase (286 aa).

The next 7 membrane-spanning stretches (helical) occupy residues 21–40 (GTLL…AGGM), 96–116 (LFVI…GLVV), 142–162 (FLGV…TGEV), 167–187 (WWLF…YAMV), 210–230 (QIIG…GWSA), 235–255 (LYGL…MLIF), and 266–286 (FLNN…DYLF).

It belongs to the UbiA prenyltransferase family. The cofactor is Mg(2+).

The protein localises to the cell inner membrane. The catalysed reaction is all-trans-octaprenyl diphosphate + 4-hydroxybenzoate = 4-hydroxy-3-(all-trans-octaprenyl)benzoate + diphosphate. Its pathway is cofactor biosynthesis; ubiquinone biosynthesis. Its function is as follows. Catalyzes the prenylation of para-hydroxybenzoate (PHB) with an all-trans polyprenyl group. Mediates the second step in the final reaction sequence of ubiquinone-8 (UQ-8) biosynthesis, which is the condensation of the polyisoprenoid side chain with PHB, generating the first membrane-bound Q intermediate 3-octaprenyl-4-hydroxybenzoate. The protein is 4-hydroxybenzoate octaprenyltransferase of Shewanella sp. (strain MR-4).